A 351-amino-acid chain; its full sequence is Centromere-binding protein 1 (351 aa).

Residue Met-1 is modified to N-acetylmethionine. Polar residues-rich tracts occupy residues 1 to 10 (MNSLANNNKL), 43 to 52 (LLSQESNDGN), and 65 to 77 (KGTQ…GLTS). Disordered stretches follow at residues 1 to 164 (MNSL…TQQS), 196 to 233 (KKDI…VERR), and 327 to 351 (YEDM…PHEA). Ser-45 bears the Phosphoserine; by ATM or ATR mark. Ser-48 carries the post-translational modification Phosphoserine. Residue Ser-84 is modified to Phosphoserine. Polar residues-rich tracts occupy residues 100-124 (VNYT…TNAN) and 138-164 (TPSN…TQQS). Thr-138 is subject to Phosphothreonine. Residues 222 to 270 (QRKDSHKEVERRRRENINTAINVLSDLLPVRESSKAAILACAAEYIQKL) enclose the bHLH domain.

As to quaternary structure, binds DNA as a dimer. Associates with MET4 to form a heteromeric complex which also includes MET28.

It is found in the nucleus. The protein resides in the mitochondrion. The protein localises to the chromosome. It localises to the centromere. Functionally, required for chromosome stability and methionine prototrophy. It is involved in chromosomal segregation. Binds to a highly conserved DNA sequence (5'-RTCACRTG-3'), called CDEI, found in centromeres and in several promoters. DNA-binding activity is enhanced by MET28. Required as an auxiliary factor for transcriptional activation of sulfur metabolism together with MET4 and MET28. This is Centromere-binding protein 1 (CBF1) from Saccharomyces cerevisiae (strain ATCC 204508 / S288c) (Baker's yeast).